Here is a 393-residue protein sequence, read N- to C-terminus: Isocitrate dehydrogenase [NAD] subunit gamma 1, mitochondrial (393 aa).

The transit peptide at 1-39 (MALKVAIAAGSAAKAIFKPALLCRPWEVLAAHEAPRRSI) directs the protein to the mitochondrion. A citrate-binding site is contributed by Thr-120. Residue Ser-130 is modified to Phosphoserine. Asn-133 lines the citrate pocket. Arg-136 and Arg-167 together coordinate substrate. The residue at position 206 (Lys-206) is an N6-acetyllysine. An N6-succinyllysine modification is found at Lys-226. Asp-254 is a binding site for substrate. Asp-254 provides a ligand contact to Mn(2+). Asn-312, Thr-313, and Asn-324 together coordinate ADP.

Belongs to the isocitrate and isopropylmalate dehydrogenases family. Heterooligomer of subunits alpha (IDH3A), beta (IDH3B), and gamma (IDH3G) in the apparent ratio of 2:1:1. The heterodimer containing one IDH3A and one IDH3B subunit and the heterodimer containing one IDH3A and one IDH3G subunit assemble into a heterotetramer (which contains two subunits of IDH3A, one of IDH3B and one of IDH3G) and further into the heterooctamer. It depends on Mg(2+) as a cofactor. The cofactor is Mn(2+).

The protein resides in the mitochondrion. With respect to regulation, the heterotetramer and the heterodimer composed of IDH3A and IDH3G subunits can be allosterically activated by citrate (CIT) or/and ADP, and the two activators can act independently or synergistically. The heterodimer composed of IDH3A and IDH3B subunits cannot be allosterically regulated and the allosteric regulation of the heterotetramer is through the IDH3G subunit and not the IDH3B subunit. The IDH3G subunit contains the allosteric site which consists of a CIT-binding site and an ADP-binding site, and the binding of CIT and ADP causes conformational changes at the allosteric site which are transmitted to the active site in the catalytic subunit (IDH3A) through a cascade of conformational changes at the heterodimer interface, leading to stabilization of the isocitrate-binding at the active site and thus activation of the enzyme. ATP can activate the heterotetramer and the heterodimer composed of IDH3A and IDH3G subunits at low concentrations but inhibits their activities at high concentrations, whereas ATP exhibits only inhibitory effect on the heterodimer composed of IDH3A and IDH3B subunits. Regulatory subunit which plays a role in the allosteric regulation of the enzyme catalyzing the decarboxylation of isocitrate (ICT) into alpha-ketoglutarate. The heterodimer composed of the alpha (IDH3A) and beta (IDH3B) subunits and the heterodimer composed of the alpha (IDH3A) and gamma (IDH3G) subunits, have considerable basal activity but the full activity of the heterotetramer (containing two subunits of IDH3A, one of IDH3B and one of IDH3G) requires the assembly and cooperative function of both heterodimers. The sequence is that of Isocitrate dehydrogenase [NAD] subunit gamma 1, mitochondrial (Idh3g) from Rattus norvegicus (Rat).